A 124-amino-acid chain; its full sequence is S-adenosylmethionine decarboxylase proenzyme (124 aa).

The Schiff-base intermediate with substrate; via pyruvic acid role is filled by serine 63. Serine 63 is subject to Pyruvic acid (Ser); by autocatalysis. Histidine 68 (proton acceptor; for processing activity) is an active-site residue. The active-site Proton donor; for catalytic activity is cysteine 83.

Belongs to the prokaryotic AdoMetDC family. Type 1 subfamily. Heterotetramer of two alpha and two beta chains arranged as a dimer of alpha/beta heterodimers. Pyruvate is required as a cofactor. In terms of processing, is synthesized initially as an inactive proenzyme. Formation of the active enzyme involves a self-maturation process in which the active site pyruvoyl group is generated from an internal serine residue via an autocatalytic post-translational modification. Two non-identical subunits are generated from the proenzyme in this reaction, and the pyruvate is formed at the N-terminus of the alpha chain, which is derived from the carboxyl end of the proenzyme. The post-translation cleavage follows an unusual pathway, termed non-hydrolytic serinolysis, in which the side chain hydroxyl group of the serine supplies its oxygen atom to form the C-terminus of the beta chain, while the remainder of the serine residue undergoes an oxidative deamination to produce ammonia and the pyruvoyl group blocking the N-terminus of the alpha chain.

It carries out the reaction S-adenosyl-L-methionine + H(+) = S-adenosyl 3-(methylsulfanyl)propylamine + CO2. It participates in amine and polyamine biosynthesis; S-adenosylmethioninamine biosynthesis; S-adenosylmethioninamine from S-adenosyl-L-methionine: step 1/1. Functionally, catalyzes the decarboxylation of S-adenosylmethionine to S-adenosylmethioninamine (dcAdoMet), the propylamine donor required for the synthesis of the polyamines spermine and spermidine from the diamine putrescine. The chain is S-adenosylmethionine decarboxylase proenzyme from Acetivibrio thermocellus (strain ATCC 27405 / DSM 1237 / JCM 9322 / NBRC 103400 / NCIMB 10682 / NRRL B-4536 / VPI 7372) (Clostridium thermocellum).